The primary structure comprises 1406 residues: Sterol 3-beta-glucosyltransferase (1406 aa).

A disordered region spans residues 83–231 (ARFDESSDSD…IHSSHESSTS (149 aa)). Residues 110 to 128 (GSSNPVNSQTEQRSGSQTS) show a composition bias toward polar residues. The span at 209 to 231 (SAGRSQNSSQESSIHSSHESSTS) shows a compositional bias: low complexity. The region spanning 236 to 286 (RLMEMFDFNKPEKVLVEYACSLLQSMLLQGYMYVTEGHICFYAYLPRKSTV) is the GRAM 1 domain. A PH domain is found at 286–385 (VAIKSGYLHK…WVKALQKVIF (100 aa)). Disordered regions lie at residues 457–558 (ASGH…AESA) and 576–622 (LDKR…DGKP). Positions 468–478 (HADRSPRSDRT) are enriched in basic and acidic residues. Polar residues-rich tracts occupy residues 490–499 (GTSQPGNGSA) and 531–548 (SESILNSFEQGTESSAVW). Over residues 576–587 (LDKRACSDERSG) the composition is skewed to basic and acidic residues. Positions 730 to 796 (DRFRAHFALP…KDVENVEKEK (67 aa)) constitute a GRAM 2 domain. Positions 917, 918, 920, 1220, 1222, 1235, 1239, 1240, 1259, and 1260 each coordinate UDP-alpha-D-glucose. Positions 1334–1406 (QRSIASSTPF…LTNSIHGAGR (73 aa)) are disordered. The segment covering 1336–1349 (SIASSTPFSPTPSA) has biased composition (low complexity). Positions 1355-1375 (QGDDDVEDSEEWTFVGDDNEM) are enriched in acidic residues. Over residues 1376–1387 (DMSRRMRDRAIS) the composition is skewed to basic and acidic residues. The segment covering 1397 to 1406 (LTNSIHGAGR) has biased composition (polar residues).

The protein belongs to the glycosyltransferase 28 family.

The protein resides in the cytoplasm. Its subcellular location is the preautophagosomal structure membrane. The enzyme catalyses a sterol + UDP-alpha-D-glucose = a sterol 3-beta-D-glucoside + UDP + H(+). The catalysed reaction is ergosterol + UDP-alpha-D-glucose = ergosteryl 3-beta-D-glucoside + UDP + H(+). Its function is as follows. Sterol glycosyltransferase responsible for the glycosylation of ergosterol to form ergosterol-glucoside. The protein is Sterol 3-beta-glucosyltransferase of Aspergillus clavatus (strain ATCC 1007 / CBS 513.65 / DSM 816 / NCTC 3887 / NRRL 1 / QM 1276 / 107).